The primary structure comprises 233 residues: 2-C-methyl-D-erythritol 4-phosphate cytidylyltransferase (233 aa).

Belongs to the IspD/TarI cytidylyltransferase family. IspD subfamily.

The enzyme catalyses 2-C-methyl-D-erythritol 4-phosphate + CTP + H(+) = 4-CDP-2-C-methyl-D-erythritol + diphosphate. It participates in isoprenoid biosynthesis; isopentenyl diphosphate biosynthesis via DXP pathway; isopentenyl diphosphate from 1-deoxy-D-xylulose 5-phosphate: step 2/6. Catalyzes the formation of 4-diphosphocytidyl-2-C-methyl-D-erythritol from CTP and 2-C-methyl-D-erythritol 4-phosphate (MEP). This chain is 2-C-methyl-D-erythritol 4-phosphate cytidylyltransferase, found in Thiobacillus denitrificans (strain ATCC 25259 / T1).